Reading from the N-terminus, the 586-residue chain is Arginine--tRNA ligase (586 aa).

A 'HIGH' region motif is present at residues 133–143; it reads ANPTGPLNIVS.

It belongs to the class-I aminoacyl-tRNA synthetase family. Monomer.

Its subcellular location is the cytoplasm. The enzyme catalyses tRNA(Arg) + L-arginine + ATP = L-arginyl-tRNA(Arg) + AMP + diphosphate. In Leptospira borgpetersenii serovar Hardjo-bovis (strain JB197), this protein is Arginine--tRNA ligase.